Reading from the N-terminus, the 522-residue chain is MSLRVHTLPTLLGAVVRPGCRELLCLLMITVTVGPGASGVCPTACICATDIVSCTNKNLSKVPGNLFRLIKRLDLSYNRIGLLDSEWIPVSFAKLNTLILRHNNITSISTGSFSTTPNLKCLDLSSNKLKTVKNAVFQELKVLEVLLLYNNHISYLDPSAFGGLSQLQKLYLSGNFLTQFPMDLYVGRFKLAELMFLDVSYNRIPSMPMHHINLVPGKQLRGIYLHGNPFVCDCSLYSLLVFWYRRHFSSVMDFKNDYTCRLWSDSRHSRQVLLLQDSFMNCSDSIINGSFRALGFIHEAQVGERLMVHCDSKTGNANTDFIWVGPDNRLLEPDKEMENFYVFHNGSLVIESPRFEDAGVYSCIAMNKQRLLNETVDVTINVSNFTVSRSHAHEAFNTAFTTLAACVASIVLVLLYLYLTPCPCKCKTKRQKNMLHQSNAHSSILSPGPASDASADERKAGAGKRVVFLEPLKDTAAGQNGKVRLFPSEAVIAEGILKSTRGKSDSDSVNSVFSDTPFVAST.

The N-terminal stretch at 1–39 (MSLRVHTLPTLLGAVVRPGCRELLCLLMITVTVGPGASG) is a signal peptide. In terms of domain architecture, LRRNT spans 40–68 (VCPTACICATDIVSCTNKNLSKVPGNLFR). The Extracellular segment spans residues 40–398 (VCPTACICAT…RSHAHEAFNT (359 aa)). 2 disulfides stabilise this stretch: cysteine 41/cysteine 47 and cysteine 45/cysteine 54. Asparagine 58 is a glycosylation site (N-linked (GlcNAc...) asparagine). LRR repeat units follow at residues 69 to 90 (LIKR…WIPV), 94 to 115 (KLNT…SFST), 118 to 139 (NLKC…VFQE), 142 to 163 (VLEV…AFGG), 166 to 187 (QLQK…LYVG), and 193 to 214 (ELMF…HINL). N-linked (GlcNAc...) asparagine glycosylation is present at asparagine 104. Residues 228–284 (NPFVCDCSLYSLLVFWYRRHFSSVMDFKNDYTCRLWSDSRHSRQVLLLQDSFMNCSD) form the LRRCT domain. 2 disulfides stabilise this stretch: cysteine 232–cysteine 260 and cysteine 234–cysteine 282. 6 N-linked (GlcNAc...) asparagine glycosylation sites follow: asparagine 281, asparagine 288, asparagine 345, asparagine 373, asparagine 381, and asparagine 384. Positions 289-379 (GSFRALGFIH…RLLNETVDVT (91 aa)) constitute an Ig-like C2-type domain. A disulfide bridge connects residues cysteine 310 and cysteine 363. The helical transmembrane segment at 399–419 (AFTTLAACVASIVLVLLYLYL) threads the bilayer. Residues 420–522 (TPCPCKCKTK…FSDTPFVAST (103 aa)) are Cytoplasmic-facing. The segment at 501 to 522 (RGKSDSDSVNSVFSDTPFVAST) is disordered.

This sequence belongs to the immunoglobulin superfamily. AMIGO family. As to quaternary structure, binds itself as well as AMIGO1 and AMIGO3. In terms of tissue distribution, highest levels in breast, ovary, cervix, and uterus. Lower levels in lung, colon, and rectum. Differentially expressed in 56% of thyroid, 57% of pancreatic and 45% of stomach cancers.

The protein resides in the cell membrane. Its subcellular location is the nucleus. Functionally, required for depolarization-dependent survival of cultured cerebellar granule neurons. May mediate homophilic as well as heterophilic cell-cell interaction with AMIGO1 or AMIGO3. May contribute to signal transduction through its intracellular domain. May be required for tumorigenesis of a subset of gastric adenocarcinomas. In Homo sapiens (Human), this protein is Amphoterin-induced protein 2.